The following is a 497-amino-acid chain: MAKYVMALDQGTTSSRAIIFDHSGKMIASLNKEFRQIYPKPGWVEHDPMEIWESQIEVAKGVIEKAGIKPEDIAAIGITNQRETTVVWDKNTGKPIYNAIVWQCRRTAPICDDLKNKGFDKKIREKTGLVVDAYFSGTKVKWILDNVEGAREKAERGELLFGNIDTWLIWNLTRGKVHVTDYSNASRTMLFNIHELKWDKEILEELNVPENMLPEVKPSSHVYGYTDKSIFGVEIPIAGDAGDQQAALFGQACFKPGMAKNTYGTGCFMLMNTGEKAVPSKTGLLTTIAWGIDGKVEYALEGSIFITGAAIQWLRDELRIIDNAPQSEEYALKVEDTNGVYVVPAFVGLGAPYWDMYARGVIVGLTRGAKREHIIRATLESIAYQTRDVLEAMQEDSGIKLQALKVDGGASANNFLMQFQADILGVPVDRPQVIETTALGAAYLAGLAVGFWNSREEIEKNWNIDRRFEPAMEEEKREKLYRGWKKAVERAMKWAEE.

ADP is bound at residue threonine 12. Threonine 12, threonine 13, and serine 14 together coordinate ATP. A sn-glycerol 3-phosphate-binding site is contributed by threonine 12. Arginine 16 serves as a coordination point for ADP. Sn-glycerol 3-phosphate-binding residues include arginine 82, glutamate 83, tyrosine 134, and aspartate 243. Residues arginine 82, glutamate 83, tyrosine 134, aspartate 243, and glutamine 244 each coordinate glycerol. Threonine 265 and glycine 308 together coordinate ADP. The ATP site is built by threonine 265, glycine 308, glutamine 312, and glycine 409. Glycine 409 and asparagine 413 together coordinate ADP.

It belongs to the FGGY kinase family. In terms of assembly, homotetramer and homodimer (in equilibrium).

It carries out the reaction glycerol + ATP = sn-glycerol 3-phosphate + ADP + H(+). It participates in polyol metabolism; glycerol degradation via glycerol kinase pathway; sn-glycerol 3-phosphate from glycerol: step 1/1. Activated by phosphorylation and inhibited by fructose 1,6-bisphosphate (FBP). Its function is as follows. Key enzyme in the regulation of glycerol uptake and metabolism. Catalyzes the phosphorylation of glycerol to yield sn-glycerol 3-phosphate. The protein is Glycerol kinase of Caldanaerobacter subterraneus subsp. tengcongensis (strain DSM 15242 / JCM 11007 / NBRC 100824 / MB4) (Thermoanaerobacter tengcongensis).